Reading from the N-terminus, the 389-residue chain is Acetate kinase (389 aa).

Mg(2+) is bound at residue N7. K14 serves as a coordination point for ATP. R88 is a binding site for substrate. The active-site Proton donor/acceptor is D145. Residues 205 to 209 (HLGNG), 279 to 281 (DLR), and 324 to 328 (GIGEN) contribute to the ATP site. E375 contacts Mg(2+).

The protein belongs to the acetokinase family. As to quaternary structure, homodimer. The cofactor is Mg(2+). Mn(2+) serves as cofactor.

The protein localises to the cytoplasm. It catalyses the reaction acetate + ATP = acetyl phosphate + ADP. The protein operates within metabolic intermediate biosynthesis; acetyl-CoA biosynthesis; acetyl-CoA from acetate: step 1/2. Functionally, catalyzes the formation of acetyl phosphate from acetate and ATP. Can also catalyze the reverse reaction. The chain is Acetate kinase from Sulfurimonas denitrificans (strain ATCC 33889 / DSM 1251) (Thiomicrospira denitrificans (strain ATCC 33889 / DSM 1251)).